A 507-amino-acid polypeptide reads, in one-letter code: Monoogygenase CPUR_05431 (507 aa).

This sequence belongs to the PheA/TfdB FAD monooxygenase family. Requires FAD as cofactor.

The protein operates within pigment biosynthesis. In terms of biological role, monoogygenase; part of the ergochrome gene cluster responsible for the typical purple-black color of the ergot sclerotia. The ergochrome gene cluster produces several ergot pigments including the yellow ergochrome secalonic acid and its derivatives, as well as the red anthraquinones endocrocin and clavorubin. The pathway begins with the synthesis of atrochrysone thioester by the polyketide synthase (PKS) CPUR_05437. The atrochrysone carboxyl ACP thioesterase CPUR_05436 then breaks the thioester bond and releases the atrochrysone carboxylic acid from CPUR_05437. The atrochrysone carboxylic acid is then converted to atrochrysone which is further transformed into emodin anthrone. The next step is performed by the anthrone oxygenase CPUR_05434 that catalyzes the oxidation of emodinanthrone to emodin. Emodin is further modified to yield monodictyphenone via several steps involving CPUR_05427, CPUR_05428, CPUR_05429 and CPUR_05430. The short chain dehydrogenase/reductase CPUR_05418 then catalyzes the C-5 ketoreduction to give the xanthone skeleton of the monomeric units. Ergochromes formation requires further dimerization steps of different xanthone units, probably catalyzed by the cytochrome P450 monooxygenase CPUR_05419. CPUR_05425, CPUR_05426 and CPUR_05431 are unique to Claviceps, thus it is likely that they are involved in further modification of xanthone units or in their dimerization. The yellow ergochromes and the red anthraquinone pigments endocrocin and clavorubin are products from the same PKS derived precursors and the latter are likely shunt products in the pathway of xanthone biosynthesis. It is proposed that atrochrysone carboxylic acid released from the PKS CPUR_05437 can also be converted to endocrocin anthrone which is further oxidized into endocrocin by CPUR_05435. Endocrocin could be then modified to clavorubin, possibly by CPUR_05423 and CPUR_05431. Clavorubin is the principal anthraquinone metabolite produced by the cluster with a much higher yield compared to endocrocin. The chain is Monoogygenase CPUR_05431 from Claviceps purpurea (strain 20.1) (Ergot fungus).